The primary structure comprises 390 residues: Heat stress transcription factor B-2b (390 aa).

Residues 165–212 are disordered; it reads TRDGSPVLSGEEQVISSSSSPEPPLVLPQAPSGSGSGGVASGDVGDEN. A coiled-coil region spans residues 206-237; the sequence is GDVGDENERLRRENAQLARELSQMRKLCNNIL. A hydrophobic repeat HR-A/B region spans residues 215 to 244; that stretch reads LRRENAQLARELSQMRKLCNNILLLMSKYA. The Nuclear localization signal signature appears at 318-322; sequence RKRMR. The interval 322–363 is disordered; it reads RHDGGGDDDHAATVKAEPMDGRPHGKDEQSAETQAWPIYRPR. A compositionally biased stretch (basic and acidic residues) spans 323–350; sequence HDGGGDDDHAATVKAEPMDGRPHGKDEQ.

The protein belongs to the HSF family. Class B subfamily. In terms of assembly, homotrimer. Exhibits temperature-dependent phosphorylation.

The protein resides in the nucleus. Functionally, transcriptional regulator that specifically binds DNA of heat shock promoter elements (HSE). This is Heat stress transcription factor B-2b (HSFB2B) from Oryza sativa subsp. japonica (Rice).